We begin with the raw amino-acid sequence, 367 residues long: MSSNSFGKLFTVTTFGESHGPAIGCVIDGCPPGLALDAAEFGHDLQRRATGKSRHTSARREADEVEILSGVYEGLTTGTPIALLIRNTDQRSKDYANIGQQFRPGHADYSYWHKYGIRDPRGGGRSSARETTMRVAAGVVAKKWLAERFGVTVRGYLSQLGDITPAGFDWSAVEDNPFFWPHAAQVPELEAYMDALRKSGDSVGARVDVVADNVPPGWGEPIYGKLDGELAAALMSINAVKGVEIGDGFASAAQKGTEHRDLLTPQGFASNHAGGILGGISTGQPVVASMVLKPTSSLRLPGPSLDTAGNVVEVVTTGRHDPCVGIRATPIAEAMVAMVLMDQALRHRAQCGDVGTITPRIPGQIDG.

The NADP(+) site is built by R48 and R54. FMN is bound by residues 125-127 (RSS), 238-239 (NA), G278, 293-297 (KPTSS), and R319.

The protein belongs to the chorismate synthase family. In terms of assembly, homotetramer. FMNH2 serves as cofactor.

It carries out the reaction 5-O-(1-carboxyvinyl)-3-phosphoshikimate = chorismate + phosphate. It functions in the pathway metabolic intermediate biosynthesis; chorismate biosynthesis; chorismate from D-erythrose 4-phosphate and phosphoenolpyruvate: step 7/7. In terms of biological role, catalyzes the anti-1,4-elimination of the C-3 phosphate and the C-6 proR hydrogen from 5-enolpyruvylshikimate-3-phosphate (EPSP) to yield chorismate, which is the branch point compound that serves as the starting substrate for the three terminal pathways of aromatic amino acid biosynthesis. This reaction introduces a second double bond into the aromatic ring system. The chain is Chorismate synthase from Stenotrophomonas maltophilia (strain K279a).